A 206-amino-acid polypeptide reads, in one-letter code: Small ribosomal subunit protein uS4 (206 aa).

Basic and acidic residues predominate over residues 25–39 (DKLLDRKPNGPGKER). Residues 25-49 (DKLLDRKPNGPGKERGARKRGKTSV) are disordered. The 63-residue stretch at 95-157 (QRLDNTIYRM…KGIQNLIRHN (63 aa)) folds into the S4 RNA-binding domain.

The protein belongs to the universal ribosomal protein uS4 family. In terms of assembly, part of the 30S ribosomal subunit. Contacts protein S5. The interaction surface between S4 and S5 is involved in control of translational fidelity.

Its function is as follows. One of the primary rRNA binding proteins, it binds directly to 16S rRNA where it nucleates assembly of the body of the 30S subunit. In terms of biological role, with S5 and S12 plays an important role in translational accuracy. The chain is Small ribosomal subunit protein uS4 from Treponema denticola (strain ATCC 35405 / DSM 14222 / CIP 103919 / JCM 8153 / KCTC 15104).